Consider the following 392-residue polypeptide: 6-aminohexanoate-dimer hydrolase (392 aa).

Residues 1 to 22 (MNARSTGQHPARYPGAAAGEPT) form a disordered region. The active site involves Ser-112.

The catalysed reaction is [N-(6-aminohexanoyl)](n) + H2O = [N-(6-aminohexanoyl)](n-1) + 6-aminohexanoate. It carries out the reaction N-(6-aminohexanoyl)-6-aminohexanoate + H2O = 2 6-aminohexanoate. It functions in the pathway xenobiotic degradation; nylon-6 oligomer degradation. Functionally, involved in nylon oligomer degradation. The protein is 6-aminohexanoate-dimer hydrolase of Paenarthrobacter ureafaciens.